A 217-amino-acid polypeptide reads, in one-letter code: MSDNRSRRIAKELADVQQDKQAGIQVWTINDDISHLKGMFRGPEGTPYEGGYFVVDIEIPIDYPFRPPKMNFDTKIYHPNVSSQTGAICLDILKDQWSPVYTMKSALISLQSLLCTPEPSNPQDAQVAQVYLQNYQQFVRTAREWTSSYAAAPAGVDLDAENTEFGGIDPNIITNLQQFGFSTELIVRVLQREHIKSQEDLKDYPNGINGILDQLLH.

The region spanning 4–151 (NRSRRIAKEL…AREWTSSYAA (148 aa)) is the UBC core domain. Cys-89 acts as the Glycyl thioester intermediate in catalysis.

It belongs to the ubiquitin-conjugating enzyme family.

It localises to the cytoplasm. It is found in the nucleus. It carries out the reaction S-ubiquitinyl-[E1 ubiquitin-activating enzyme]-L-cysteine + [E2 ubiquitin-conjugating enzyme]-L-cysteine = [E1 ubiquitin-activating enzyme]-L-cysteine + S-ubiquitinyl-[E2 ubiquitin-conjugating enzyme]-L-cysteine.. It functions in the pathway protein modification; protein ubiquitination. Functionally, catalyzes the covalent attachment of ubiquitin to other proteins. Functions in degradation of misfolded or regulated proteins localized in the endoplasmic reticulum (ER) lumen or membrane via the ubiquitin-proteasome system. Cognate E2 conjugating enzyme for the HRD1 ubiquitin ligase complex, which is part of the ERAD-L and ERAD-M pathways responsible for the rapid degradation of soluble lumenal and membrane proteins with misfolded lumenal domains (ERAD-L), or ER-membrane proteins with misfolded transmembrane domains (ERAD-M). This chain is Ubiquitin-conjugating enzyme E2 1 (ubc1), found in Schizosaccharomyces pombe (strain 972 / ATCC 24843) (Fission yeast).